The chain runs to 486 residues: Kynurenine 3-monooxygenase (486 aa).

FAD contacts are provided by residues Val-19, 37 to 40, and Ala-57; that span reads YEAR. Residues Arg-85 and Tyr-99 each contribute to the L-kynurenine site. FAD-binding positions include Arg-111, Leu-136, Thr-172, Asp-304, and 317-318; that span reads MN. Positions 363 and 398 each coordinate L-kynurenine. The next 2 helical transmembrane spans lie at 385–404 and 425–445; these read FLHAIMPSTFIPLYTMVTFS and GLFFLGSLIAISSTYLLIHYM. N-linked (GlcNAc...) asparagine glycosylation is present at Asn-465.

Belongs to the aromatic-ring hydroxylase family. KMO subfamily. FAD is required as a cofactor. In terms of tissue distribution, highest levels in placenta and liver. Detectable in kidney.

It localises to the mitochondrion outer membrane. The enzyme catalyses L-kynurenine + NADPH + O2 + H(+) = 3-hydroxy-L-kynurenine + NADP(+) + H2O. Its pathway is cofactor biosynthesis; NAD(+) biosynthesis; quinolinate from L-kynurenine: step 1/3. Its function is as follows. Catalyzes the hydroxylation of L-kynurenine (L-Kyn) to form 3-hydroxy-L-kynurenine (L-3OHKyn). Required for synthesis of quinolinic acid, a neurotoxic NMDA receptor antagonist and potential endogenous inhibitor of NMDA receptor signaling in axonal targeting, synaptogenesis and apoptosis during brain development. Quinolinic acid may also affect NMDA receptor signaling in pancreatic beta cells, osteoblasts, myocardial cells, and the gastrointestinal tract. In Homo sapiens (Human), this protein is Kynurenine 3-monooxygenase.